The sequence spans 196 residues: SAGA-associated factor 11 homolog (196 aa).

The interval 1 to 22 is disordered; sequence MSAANMPTTTGAQGSGNQVPTT. Residues 106–127 form an SGF11-type zinc finger; it reads CTCPNCDRLVAAARFAPHLEKC. Residues 144–196 are disordered; that stretch reads TKEGASSAHLHSAGNAGGTDDEDDVDWSSDKRRKKSNQNSRNNGSKKNNGKTF. Position 172 is a phosphoserine (Ser-172). A compositionally biased stretch (low complexity) spans 180–196; that stretch reads NQNSRNNGSKKNNGKTF.

Belongs to the SGF11 family. Component of some SAGA transcription coactivator-HAT complexes, at least composed of Ada2b, not/nonstop, Pcaf/Gcn5, Sgf11 and Spt3. Within the SAGA complex, Sgf11, e(y)2, and not/nonstop form an additional subcomplex of SAGA called the DUB module (deubiquitination module). Interacts directly with not/nonstop. Interacts with the AMEX complex component xmas-2. Interacts with Cbp80; important for promoter recruitment of Sgf11 that is not associated with the DUB module.

It is found in the nucleus. The protein localises to the nucleoplasm. It localises to the cytoplasm. Functionally, component of the transcription regulatory histone acetylation (HAT) complex SAGA, a multiprotein complex that activates transcription by remodeling chromatin and mediating histone acetylation and deubiquitination. Within the SAGA complex, participates in a subcomplex that specifically deubiquitinates histone H2B. The SAGA complex is recruited to specific gene promoters by activators, where it is required for transcription. Required for nuclear receptor-mediated transactivation. Binds independently on SAGA to promoters in an RNA-dependent manner. Binds to mRNA and is essential for total mRNA export from the nucleus. Required to counteract heterochromatin silencing. Controls the development of neuronal connectivity in visual system by being required for accurate axon targeting in the optic lobe. Required for expression of ecdysone-induced genes such as br/broad. This chain is SAGA-associated factor 11 homolog, found in Drosophila yakuba (Fruit fly).